Here is a 468-residue protein sequence, read N- to C-terminus: Uronate isomerase (468 aa).

Belongs to the metallo-dependent hydrolases superfamily. Uronate isomerase family.

The catalysed reaction is D-glucuronate = D-fructuronate. The enzyme catalyses aldehydo-D-galacturonate = keto-D-tagaturonate. The protein operates within carbohydrate metabolism; pentose and glucuronate interconversion. In Marinomonas sp. (strain MWYL1), this protein is Uronate isomerase.